The sequence spans 509 residues: Histone deacetylase 2 (509 aa).

The histone deacetylase stretch occupies residues 24–338 (RRVCYFYDPE…WCYETGVALG (315 aa)). The active-site Proton donor/acceptor is His-158. Residues Asp-193, His-195, and Asp-281 each coordinate Zn(2+). A disordered region spans residues 394-509 (PSVQFEERIP…NAKNEPGSSL (116 aa)). 3 stretches are compositionally biased toward basic and acidic residues: residues 398–409 (FEERIPETKLPE), 418–434 (DERHDPDSDMLLDDHKP), and 448–472 (VKREITETETKDQHGKRLTTEHKVP). Residues 481–494 (SSKQVPTADANSMA) are compositionally biased toward polar residues.

Belongs to the histone deacetylase family. HD Type 1 subfamily. It depends on Zn(2+) as a cofactor. In terms of tissue distribution, expressed in roots.

It localises to the nucleus. It catalyses the reaction N(6)-acetyl-L-lysyl-[histone] + H2O = L-lysyl-[histone] + acetate. Functionally, responsible for the deacetylation of lysine residues on the N-terminal part of the core histones (H2A, H2B, H3 and H4). Histone deacetylation gives a tag for epigenetic repression and plays an important role in transcriptional regulation, cell cycle progression and developmental events. Histone deacetylases act via the formation of large multiprotein complexes. In Oryza sativa subsp. japonica (Rice), this protein is Histone deacetylase 2.